Reading from the N-terminus, the 349-residue chain is Fructose-1,6-bisphosphatase class 1 (349 aa).

Residues glutamate 113, aspartate 135, isoleucine 137, and aspartate 138 each contribute to the Mg(2+) site. Substrate-binding positions include 138 to 141 (DGSS), asparagine 230, tyrosine 258, and lysine 288. Mg(2+) is bound at residue glutamate 294.

Belongs to the FBPase class 1 family. In terms of assembly, homotetramer. Requires Mg(2+) as cofactor.

The protein localises to the cytoplasm. The enzyme catalyses beta-D-fructose 1,6-bisphosphate + H2O = beta-D-fructose 6-phosphate + phosphate. It functions in the pathway carbohydrate biosynthesis; Calvin cycle. This Nostoc punctiforme (strain ATCC 29133 / PCC 73102) protein is Fructose-1,6-bisphosphatase class 1.